The following is a 249-amino-acid chain: Phosphoribosylaminoimidazole-succinocarboxamide synthase (249 aa).

It belongs to the SAICAR synthetase family.

It carries out the reaction 5-amino-1-(5-phospho-D-ribosyl)imidazole-4-carboxylate + L-aspartate + ATP = (2S)-2-[5-amino-1-(5-phospho-beta-D-ribosyl)imidazole-4-carboxamido]succinate + ADP + phosphate + 2 H(+). Its pathway is purine metabolism; IMP biosynthesis via de novo pathway; 5-amino-1-(5-phospho-D-ribosyl)imidazole-4-carboxamide from 5-amino-1-(5-phospho-D-ribosyl)imidazole-4-carboxylate: step 1/2. This chain is Phosphoribosylaminoimidazole-succinocarboxamide synthase, found in Chloroflexus aurantiacus (strain ATCC 29366 / DSM 635 / J-10-fl).